The chain runs to 365 residues: Glycine oxidase (365 aa).

FAD is bound by residues valine 12–isoleucine 13, aspartate 32–glutamine 33, serine 40–serine 41, glycine 45–isoleucine 47, and isoleucine 173. Arginine 302 contributes to the substrate binding site. Position 327-333 (histidine 327–valine 333) interacts with FAD.

The protein belongs to the DAO family. ThiO subfamily. In terms of assembly, monomer. It depends on FAD as a cofactor.

The catalysed reaction is glycine + O2 + H2O = glyoxylate + H2O2 + NH4(+). It catalyses the reaction sarcosine + O2 + H2O = methylamine + glyoxylate + H2O2. The protein operates within cofactor biosynthesis; thiamine diphosphate biosynthesis. In terms of biological role, catalyzes the oxidation of glycine, leading to glyoxyl imine and hydrogen peroxide as primary products; glyoxyl imine is used for the biosynthesis of the thiazole ring of thiamine. Otherwise, glyoxyl imine is spontaneously hydrolyzed in water to produce glyoxylate and ammonia. Can also use sarcosine (N-methylglycine) as substrate, and, to a lesser extent, N-ethylglycine and D-proline. Has no activity towards other amino-acids D-Asp, D-Glu, D-Gln, D-His, D-Leu, D-Lys, D-ornithine, D-Trp, D-Val, L-Ala, L-Asp, L-Glu, L-His, L-Leu, L-Lys, L-Met and L-Pro. This chain is Glycine oxidase, found in Pseudomonas putida (strain ATCC 47054 / DSM 6125 / CFBP 8728 / NCIMB 11950 / KT2440).